Here is a 320-residue protein sequence, read N- to C-terminus: Beta-ketoacyl-[acyl-carrier-protein] synthase III (320 aa).

Active-site residues include cysteine 112 and histidine 245. The tract at residues 246 to 250 is ACP-binding; it reads QANIR. The active site involves asparagine 275.

Belongs to the thiolase-like superfamily. FabH family. Homodimer.

The protein localises to the cytoplasm. The catalysed reaction is malonyl-[ACP] + acetyl-CoA + H(+) = 3-oxobutanoyl-[ACP] + CO2 + CoA. Its pathway is lipid metabolism; fatty acid biosynthesis. Functionally, catalyzes the condensation reaction of fatty acid synthesis by the addition to an acyl acceptor of two carbons from malonyl-ACP. Catalyzes the first condensation reaction which initiates fatty acid synthesis and may therefore play a role in governing the total rate of fatty acid production. Possesses both acetoacetyl-ACP synthase and acetyl transacylase activities. Its substrate specificity determines the biosynthesis of branched-chain and/or straight-chain of fatty acids. This Streptococcus thermophilus (strain CNRZ 1066) protein is Beta-ketoacyl-[acyl-carrier-protein] synthase III.